A 477-amino-acid polypeptide reads, in one-letter code: Argininosuccinate lyase (477 aa).

Belongs to the lyase 1 family. Argininosuccinate lyase subfamily.

It is found in the cytoplasm. It catalyses the reaction 2-(N(omega)-L-arginino)succinate = fumarate + L-arginine. It functions in the pathway amino-acid biosynthesis; L-arginine biosynthesis; L-arginine from L-ornithine and carbamoyl phosphate: step 3/3. The protein is Argininosuccinate lyase of Streptomyces avermitilis (strain ATCC 31267 / DSM 46492 / JCM 5070 / NBRC 14893 / NCIMB 12804 / NRRL 8165 / MA-4680).